The chain runs to 299 residues: Elongation factor Ts (299 aa).

The involved in Mg(2+) ion dislocation from EF-Tu stretch occupies residues 82-85; that stretch reads TDFV.

Belongs to the EF-Ts family.

The protein localises to the cytoplasm. Functionally, associates with the EF-Tu.GDP complex and induces the exchange of GDP to GTP. It remains bound to the aminoacyl-tRNA.EF-Tu.GTP complex up to the GTP hydrolysis stage on the ribosome. The polypeptide is Elongation factor Ts (Dechloromonas aromatica (strain RCB)).